Here is a 453-residue protein sequence, read N- to C-terminus: Carbamoyl phosphate synthase arginine-specific small chain (453 aa).

A mitochondrion-targeting transit peptide spans 1–28; the sequence is MFARVFKAMPARAPAFTSVNASIQSRFM. One can recognise a Glutamine amidotransferase type-1 domain in the interval 219 to 406; the sequence is HVAVIDCGVK…LDSVVKYKNH (188 aa). Cys-295 functions as the Nucleophile in the catalytic mechanism. Catalysis depends on residues His-379 and Glu-381.

This sequence belongs to the CarA family. As to quaternary structure, heterodimer composed of 2 chains; the small (or glutamine) chain promotes the hydrolysis of glutamine to ammonia, which is used by the large (or ammonia) chain to synthesize carbamoyl phosphate.

It localises to the mitochondrion matrix. It catalyses the reaction hydrogencarbonate + L-glutamine + 2 ATP + H2O = carbamoyl phosphate + L-glutamate + 2 ADP + phosphate + 2 H(+). The enzyme catalyses L-glutamine + H2O = L-glutamate + NH4(+). Its pathway is amino-acid biosynthesis; L-arginine biosynthesis; carbamoyl phosphate from bicarbonate: step 1/1. In terms of biological role, small subunit of the arginine-specific carbamoyl phosphate synthase (CPSase). CPSase catalyzes the formation of carbamoyl phosphate from the ammonia moiety of glutamine, carbonate, and phosphate donated by ATP, the first step of the arginine biosynthetic pathway. The small subunit (glutamine amidotransferase) binds and cleaves glutamine to supply the large subunit with the substrate ammonia. This chain is Carbamoyl phosphate synthase arginine-specific small chain (cpa1), found in Aspergillus niger (strain ATCC MYA-4892 / CBS 513.88 / FGSC A1513).